The chain runs to 255 residues: Ribonuclease HII (255 aa).

The RNase H type-2 domain maps to 70–255 (EYIAGVDEVG…FEPVKKILLK (186 aa)). Residues Asp76, Glu77, and Asp168 each contribute to the a divalent metal cation site.

It belongs to the RNase HII family. It depends on Mn(2+) as a cofactor. The cofactor is Mg(2+).

The protein localises to the cytoplasm. It carries out the reaction Endonucleolytic cleavage to 5'-phosphomonoester.. Functionally, endonuclease that specifically degrades the RNA of RNA-DNA hybrids. The sequence is that of Ribonuclease HII from Ligilactobacillus salivarius (strain UCC118) (Lactobacillus salivarius).